Consider the following 156-residue polypeptide: MSDENNQPFFNIQRIYLKDMSLEQPNSPAIFLEQEMPSVEVEVDVKAERLADTVFEILVTGTVTAKVSDKVAFLIEAKQAGIFDIRNIPAEQIDPLVGIACPTILFPYLRSNIADAITRAGFPPIHLAEINFQALYEQRLAQIATQETGAGSAAHH.

Belongs to the SecB family. In terms of assembly, homotetramer, a dimer of dimers. One homotetramer interacts with 1 SecA dimer.

Its subcellular location is the cytoplasm. Functionally, one of the proteins required for the normal export of preproteins out of the cell cytoplasm. It is a molecular chaperone that binds to a subset of precursor proteins, maintaining them in a translocation-competent state. It also specifically binds to its receptor SecA. The polypeptide is Protein-export protein SecB (Paraburkholderia phymatum (strain DSM 17167 / CIP 108236 / LMG 21445 / STM815) (Burkholderia phymatum)).